Here is a 304-residue protein sequence, read N- to C-terminus: HTH-type transcriptional regulator AdmX (304 aa).

Residues 1–58 (MKLRHLEIFYTVMTCGSLSRAAESLNISQPAASKSLKNAELKLGFKLFQRVRGKLLPS) enclose the HTH lysR-type domain. Positions 18-37 (LSRAAESLNISQPAASKSLK) form a DNA-binding region, H-T-H motif.

It belongs to the LysR transcriptional regulatory family.

Its subcellular location is the cytoplasm. With respect to regulation, admX-mediated transcription is inhibited by indole-3-acetic and indole-3-pyruvic acids. AdmX recognizes and binds the auxin indole-3-acetic acid (IAA), which causes conformational changes in AdmX that result in the inhibition of the expression of the andrimid gene cluster and the suppression of antibiotic production. It also recognizes indole-3-pyruvic acid (IPA), an intermediate of the main IAA biosynthetic pathway in plants and plant beneficial bacteria, which also prevents andrimid synthesis, but to a much lesser extent. Its function is as follows. Positively regulates the biosynthesis of andrimid, a broad-spectrum antibiotic, by activating the expression of the adm biosynthetic gene cluster. It specifically binds to a region within the adm promoter. The chain is HTH-type transcriptional regulator AdmX from Serratia plymuthica.